Consider the following 144-residue polypeptide: Large ribosomal subunit protein uL13 (144 aa).

It belongs to the universal ribosomal protein uL13 family. In terms of assembly, part of the 50S ribosomal subunit.

Functionally, this protein is one of the early assembly proteins of the 50S ribosomal subunit, although it is not seen to bind rRNA by itself. It is important during the early stages of 50S assembly. The sequence is that of Large ribosomal subunit protein uL13 from Nitrosospira multiformis (strain ATCC 25196 / NCIMB 11849 / C 71).